Here is a 414-residue protein sequence, read N- to C-terminus: uncharacterized protein (414 aa).

Positions 246 to 360 (EAPNITKLAG…LNKRVEEIRR (115 aa)) constitute a Nop domain. Positions 358–414 (IRRKYPKPPKKKKKEKPKAKKKEKKGKKEKSKKKKDKKKDKKGKKERKVIGKTKSRK) are disordered. Residues 361 to 414 (KYPKPPKKKKKEKPKAKKKEKKGKKEKSKKKKDKKKDKKGKKERKVIGKTKSRK) are compositionally biased toward basic residues.

The protein belongs to the NOP5/NOP56 family.

This is an uncharacterized protein from Methanocaldococcus jannaschii (strain ATCC 43067 / DSM 2661 / JAL-1 / JCM 10045 / NBRC 100440) (Methanococcus jannaschii).